Consider the following 159-residue polypeptide: Ribosomal RNA large subunit methyltransferase H (159 aa).

S-adenosyl-L-methionine contacts are provided by residues Leu-76, Gly-108, and 127–132; that span reads FSNMTF.

It belongs to the RNA methyltransferase RlmH family. Homodimer.

It is found in the cytoplasm. It catalyses the reaction pseudouridine(1915) in 23S rRNA + S-adenosyl-L-methionine = N(3)-methylpseudouridine(1915) in 23S rRNA + S-adenosyl-L-homocysteine + H(+). Specifically methylates the pseudouridine at position 1915 (m3Psi1915) in 23S rRNA. The sequence is that of Ribosomal RNA large subunit methyltransferase H from Staphylococcus epidermidis (strain ATCC 35984 / DSM 28319 / BCRC 17069 / CCUG 31568 / BM 3577 / RP62A).